A 553-amino-acid chain; its full sequence is Dihydrolipoyllysine-residue acetyltransferase component of pyruvate dehydrogenase complex (553 aa).

The region spanning 4–78 (AIEIKVPDIG…SEGSVLVMLE (75 aa)) is the Lipoyl-binding 1 domain. The residue at position 44 (Lys-44) is an N6-lipoyllysine. A disordered region spans residues 97 to 118 (AAAAPAPAPAPAAAPAAAPAAG). The Lipoyl-binding 2 domain maps to 122–196 (TIEVKVPDIG…AEGTLLLILE (75 aa)). The residue at position 162 (Lys-162) is an N6-lipoyllysine. Positions 250–287 (HASPSVRKFARELGVDVSRVPGTGPKGRITQEDVQGYV) constitute a Peripheral subunit-binding (PSBD) domain. Residue His-526 is part of the active site.

The protein belongs to the 2-oxoacid dehydrogenase family. In terms of assembly, forms a 24-polypeptide structural core with octahedral symmetry. (R)-lipoate is required as a cofactor.

The enzyme catalyses N(6)-[(R)-dihydrolipoyl]-L-lysyl-[protein] + acetyl-CoA = N(6)-[(R)-S(8)-acetyldihydrolipoyl]-L-lysyl-[protein] + CoA. In terms of biological role, the pyruvate dehydrogenase complex catalyzes the overall conversion of pyruvate to acetyl-CoA and CO(2). It contains multiple copies of three enzymatic components: pyruvate dehydrogenase (E1), dihydrolipoamide acetyltransferase (E2) and lipoamide dehydrogenase (E3). The protein is Dihydrolipoyllysine-residue acetyltransferase component of pyruvate dehydrogenase complex (pdhB) of Cupriavidus necator (strain ATCC 17699 / DSM 428 / KCTC 22496 / NCIMB 10442 / H16 / Stanier 337) (Ralstonia eutropha).